We begin with the raw amino-acid sequence, 424 residues long: D-inositol 3-phosphate glycosyltransferase (424 aa).

His9 provides a ligand contact to 1D-myo-inositol 3-phosphate. UDP-N-acetyl-alpha-D-glucosamine contacts are provided by residues Gln15–Pro16 and Gly23. Residues Asp20–Asn25, Lys78, Tyr110, Thr134, and Arg154 each bind 1D-myo-inositol 3-phosphate. 3 residues coordinate UDP-N-acetyl-alpha-D-glucosamine: Arg231, Lys236, and Arg294. Mg(2+) is bound by residues Tyr303, Arg304, and Ala306. 2 residues coordinate UDP-N-acetyl-alpha-D-glucosamine: Glu316 and Glu324. Residue Thr330 coordinates Mg(2+).

Belongs to the glycosyltransferase group 1 family. MshA subfamily. As to quaternary structure, homodimer.

The catalysed reaction is 1D-myo-inositol 3-phosphate + UDP-N-acetyl-alpha-D-glucosamine = 1D-myo-inositol 2-acetamido-2-deoxy-alpha-D-glucopyranoside 3-phosphate + UDP + H(+). Its function is as follows. Catalyzes the transfer of a N-acetyl-glucosamine moiety to 1D-myo-inositol 3-phosphate to produce 1D-myo-inositol 2-acetamido-2-deoxy-glucopyranoside 3-phosphate in the mycothiol biosynthesis pathway. The protein is D-inositol 3-phosphate glycosyltransferase of Corynebacterium efficiens (strain DSM 44549 / YS-314 / AJ 12310 / JCM 11189 / NBRC 100395).